A 277-amino-acid chain; its full sequence is Transcription factor WRKY19 (277 aa).

The WRKY DNA-binding region spans 100 to 168; sequence QDTASLDDGL…YLGDHTCGQA (69 aa).

The protein belongs to the WRKY group III family.

It is found in the nucleus. Its function is as follows. May play a role in defense responses. The sequence is that of Transcription factor WRKY19 from Oryza sativa subsp. japonica (Rice).